We begin with the raw amino-acid sequence, 123 residues long: Ribosome-binding factor A (123 aa).

This sequence belongs to the RbfA family. As to quaternary structure, monomer. Binds 30S ribosomal subunits, but not 50S ribosomal subunits or 70S ribosomes.

It is found in the cytoplasm. One of several proteins that assist in the late maturation steps of the functional core of the 30S ribosomal subunit. Associates with free 30S ribosomal subunits (but not with 30S subunits that are part of 70S ribosomes or polysomes). Required for efficient processing of 16S rRNA. May interact with the 5'-terminal helix region of 16S rRNA. In Ralstonia nicotianae (strain ATCC BAA-1114 / GMI1000) (Ralstonia solanacearum), this protein is Ribosome-binding factor A.